A 159-amino-acid chain; its full sequence is Protein-export protein SecB (159 aa).

The protein belongs to the SecB family. In terms of assembly, homotetramer, a dimer of dimers. One homotetramer interacts with 1 SecA dimer.

It localises to the cytoplasm. Its function is as follows. One of the proteins required for the normal export of preproteins out of the cell cytoplasm. It is a molecular chaperone that binds to a subset of precursor proteins, maintaining them in a translocation-competent state. It also specifically binds to its receptor SecA. This chain is Protein-export protein SecB, found in Pseudomonas fluorescens (strain ATCC BAA-477 / NRRL B-23932 / Pf-5).